A 102-amino-acid chain; its full sequence is MEITDVRLRRVETDGRMKAISSITIDGEFVIHDIRVIDGNEGLFVAMPSKRTPDGEFRDIAHPINSGTRAKIQEAVLAAYEVADEPAVNEESSADESIVEEN.

The protein belongs to the SpoVG family.

Could be involved in septation. The chain is Putative septation protein SpoVG 1 from Listeria monocytogenes serotype 4b (strain F2365).